The following is a 359-amino-acid chain: MDQLISQLNFKSHNSIIHSVDSIGDDTCYVLDLSVTPNLLAAAGSNYLIKIYDRSNNTILNVLSGHKDAINETKFIENTNTLLSCSSDKTVKIWDTKTGQCSQTINQQGEIFSIDLNGDILAMGVGSMVVLYNLSTKKMIRKFDCSHTEDVTRVRFHPIDKNKLVSCSVDGLICMYDLEQADDDDAIVHVINAEDSIGNIGFFGSAYQYLYTLSHTERLATWDLTTGLKIKHYGADLRSTLSDRYKFEINYFISCIYDNASNQLILFGGDFNGTGHVFLVTPDEVIQISKLENVHTDVIRNVFWDKFKSELITSSEDSKIGFWTNNPSITNILKINNDTSSNKMKDDKLKSKKTSPYNK.

WD repeat units lie at residues 23 to 62, 65 to 104, 106 to 144, 146 to 186, 192 to 232, and 294 to 333; these read IGDD…ILNV, GHKD…CSQT, NQQG…RKFD, SHTE…DDDA, NAED…KIKH, and VHTD…TNIL.

The protein is WD repeat-containing protein 89 homolog (wdr89) of Dictyostelium discoideum (Social amoeba).